Consider the following 404-residue polypeptide: 5-aminolevulinate synthase (404 aa).

Substrate contacts are provided by arginine 21 and serine 136. Positions 188, 216, and 244 each coordinate pyridoxal 5'-phosphate. Lysine 247 is a catalytic residue. Lysine 247 carries the post-translational modification N6-(pyridoxal phosphate)lysine. Pyridoxal 5'-phosphate is bound by residues threonine 276 and threonine 277. Threonine 362 lines the substrate pocket.

Belongs to the class-II pyridoxal-phosphate-dependent aminotransferase family. Homodimer. Pyridoxal 5'-phosphate serves as cofactor.

The enzyme catalyses succinyl-CoA + glycine + H(+) = 5-aminolevulinate + CO2 + CoA. It functions in the pathway porphyrin-containing compound metabolism; protoporphyrin-IX biosynthesis; 5-aminolevulinate from glycine: step 1/1. In Rhizobium meliloti (strain 1021) (Ensifer meliloti), this protein is 5-aminolevulinate synthase (hemA).